The following is a 282-amino-acid chain: HTH-type transcriptional activator RhaR (282 aa).

One can recognise an HTH araC/xylS-type domain in the interval 179–277; sequence DKLITALANS…GMTPSQWRHL (99 aa). 2 DNA-binding regions (H-T-H motif) span residues 196 to 217 and 244 to 267; these read DAFCQQEQCSERVLRQQFRAQT and ISEISMQCGFEDSNYFSVVFTRET.

As to quaternary structure, binds DNA as a dimer.

The protein localises to the cytoplasm. Its function is as follows. Activates expression of the rhaSR operon in response to L-rhamnose. The sequence is that of HTH-type transcriptional activator RhaR from Salmonella dublin (strain CT_02021853).